Consider the following 55-residue polypeptide: Cop-6 protein (55 aa).

Belongs to the transcriptional regulatory CopG/NikR family.

Its function is as follows. Acts in trans as a negative regulatory element in pE194 replication. The sequence is that of Cop-6 protein from Staphylococcus aureus.